Consider the following 148-residue polypeptide: Deoxyuridine 5'-triphosphate nucleotidohydrolase (148 aa).

Ser-69, Gly-82, Asp-85, Tyr-88, Arg-137, Phe-142, and Gly-143 together coordinate dUMP.

It belongs to the dUTPase family. In terms of assembly, homotrimer. It depends on Mg(2+) as a cofactor.

It catalyses the reaction dUTP + H2O = dUMP + diphosphate + H(+). Its pathway is pyrimidine metabolism; dUMP biosynthesis; dUMP from dCTP (dUTP route): step 2/2. Its function is as follows. Involved in nucleotide metabolism via production of dUMP, the immediate precursor of thymidine nucleotides, and decreases the intracellular concentration of dUTP so that uracil cannot be incorporated into DNA. In Kluyveromyces lactis (strain ATCC 8585 / CBS 2359 / DSM 70799 / NBRC 1267 / NRRL Y-1140 / WM37) (Yeast), this protein is Deoxyuridine 5'-triphosphate nucleotidohydrolase (DUT1).